The sequence spans 292 residues: Hydroxysqualene synthase (292 aa).

The protein belongs to the phytoene/squalene synthase family. HpnC subfamily.

It catalyses the reaction presqualene diphosphate + H2O = hydroxysqualene + diphosphate. Its pathway is secondary metabolite biosynthesis; hopanoid biosynthesis. In terms of biological role, involved in the biosynthesis of the hopanoid precursor squalene (SQ) from farnesyl diphosphate (FPP). Catalyzes the second step, the conversion of presqualene diphosphate (PSPP) to hydroxysqualene (HSQ). The protein is Hydroxysqualene synthase of Rhodopseudomonas palustris (strain ATCC BAA-98 / CGA009).